Here is a 63-residue protein sequence, read N- to C-terminus: U-reduvitoxin-Pr9a (63 aa).

An N-terminal signal peptide occupies residues 1 to 19; that stretch reads MRFFSLFTFLVAFIAAALA. A propeptide spanning residues 20–42 is cleaved from the precursor; sequence APVEIGEDLFALRPTGAKRDIIL. The cysteines at positions 47 and 60 are disulfide-linked.

Expressed by the venom gland.

It localises to the secreted. This chain is U-reduvitoxin-Pr9a, found in Platymeris rhadamanthus (Red spot assassin bug).